Reading from the N-terminus, the 211-residue chain is LexA repressor (211 aa).

A DNA-binding region (H-T-H motif) is located at residues 35 to 55 (RAEIANFFGFKSANAAEEHLK). Catalysis depends on for autocatalytic cleavage activity residues S128 and K165.

This sequence belongs to the peptidase S24 family. As to quaternary structure, homodimer.

The catalysed reaction is Hydrolysis of Ala-|-Gly bond in repressor LexA.. Functionally, represses a number of genes involved in the response to DNA damage (SOS response), including recA and lexA. In the presence of single-stranded DNA, RecA interacts with LexA causing an autocatalytic cleavage which disrupts the DNA-binding part of LexA, leading to derepression of the SOS regulon and eventually DNA repair. This is LexA repressor from Colwellia psychrerythraea (strain 34H / ATCC BAA-681) (Vibrio psychroerythus).